Here is a 478-residue protein sequence, read N- to C-terminus: Proline--tRNA ligase (478 aa).

The protein belongs to the class-II aminoacyl-tRNA synthetase family. ProS type 3 subfamily. In terms of assembly, homodimer.

It localises to the cytoplasm. The catalysed reaction is tRNA(Pro) + L-proline + ATP = L-prolyl-tRNA(Pro) + AMP + diphosphate. In terms of biological role, catalyzes the attachment of proline to tRNA(Pro) in a two-step reaction: proline is first activated by ATP to form Pro-AMP and then transferred to the acceptor end of tRNA(Pro). This Ignicoccus hospitalis (strain KIN4/I / DSM 18386 / JCM 14125) protein is Proline--tRNA ligase.